The chain runs to 102 residues: Small ribosomal subunit protein uS10 (102 aa).

Belongs to the universal ribosomal protein uS10 family. As to quaternary structure, part of the 30S ribosomal subunit.

Its function is as follows. Involved in the binding of tRNA to the ribosomes. This is Small ribosomal subunit protein uS10 from Leptospira biflexa serovar Patoc (strain Patoc 1 / Ames).